A 225-amino-acid polypeptide reads, in one-letter code: Cytidylate kinase (225 aa).

Gly-11–Thr-19 is a binding site for ATP.

Belongs to the cytidylate kinase family. Type 1 subfamily.

The protein resides in the cytoplasm. The enzyme catalyses CMP + ATP = CDP + ADP. The catalysed reaction is dCMP + ATP = dCDP + ADP. This Bacillus cereus (strain G9842) protein is Cytidylate kinase.